The chain runs to 331 residues: Glyoxylate reductase (331 aa).

NADP(+)-binding positions include 158-161, 180-182, and 239-241; these read FGRI, SRT, and TSR. Catalysis depends on residues arginine 241 and glutamate 270. Histidine 288 serves as the catalytic Proton donor. NADP(+) is bound at residue 288 to 290; it reads HIG.

This sequence belongs to the D-isomer specific 2-hydroxyacid dehydrogenase family. GyaR subfamily. Homodimer.

The protein localises to the cytoplasm. The enzyme catalyses glycolate + NAD(+) = glyoxylate + NADH + H(+). The chain is Glyoxylate reductase from Thermococcus litoralis (strain ATCC 51850 / DSM 5473 / JCM 8560 / NS-C).